A 95-amino-acid polypeptide reads, in one-letter code: Ragulator complex protein LAMTOR4 homolog (95 aa).

This sequence belongs to the LAMTOR4 family. As to quaternary structure, part of the Ragulator complex.

The protein localises to the lysosome. Regulator of the TOR pathway, a signaling cascade that promotes cell growth in response to growth factors, energy levels, and amino acids. As part of the Ragulator complex, may activate the TOR signaling cascade in response to amino acids. The polypeptide is Ragulator complex protein LAMTOR4 homolog (Nematostella vectensis (Starlet sea anemone)).